The sequence spans 269 residues: 3-methyl-2-oxobutanoate hydroxymethyltransferase (269 aa).

Mg(2+) is bound by residues Asp-51 and Asp-90. Residues 51–52 (DS), Asp-90, and Lys-120 each bind 3-methyl-2-oxobutanoate. Position 122 (Glu-122) interacts with Mg(2+). The active-site Proton acceptor is the Glu-187.

It belongs to the PanB family. In terms of assembly, homodecamer; pentamer of dimers. Requires Mg(2+) as cofactor.

It is found in the cytoplasm. It catalyses the reaction 3-methyl-2-oxobutanoate + (6R)-5,10-methylene-5,6,7,8-tetrahydrofolate + H2O = 2-dehydropantoate + (6S)-5,6,7,8-tetrahydrofolate. The protein operates within cofactor biosynthesis; (R)-pantothenate biosynthesis; (R)-pantoate from 3-methyl-2-oxobutanoate: step 1/2. In terms of biological role, catalyzes the reversible reaction in which hydroxymethyl group from 5,10-methylenetetrahydrofolate is transferred onto alpha-ketoisovalerate to form ketopantoate. The polypeptide is 3-methyl-2-oxobutanoate hydroxymethyltransferase (Tropheryma whipplei (strain TW08/27) (Whipple's bacillus)).